Here is a 499-residue protein sequence, read N- to C-terminus: Potassium voltage-gated channel subfamily A member 2 (499 aa).

The tract at residues 1 to 26 is disordered; the sequence is MTVATEDPADEAAALPGHPQDTYDPE. Residues 1-125 are tetramerization domain; that stretch reads MTVATEDPAD…YELGEEAMEM (125 aa). The Cytoplasmic portion of the chain corresponds to 1-160; it reads MTVATEDPAD…LLFEYPESSG (160 aa). Residues 161 to 182 traverse the membrane as a helical segment; sequence PARIIAIVSVMVILISIVSFCL. Over 183 to 221 the chain is Extracellular; that stretch reads ETLPIFRDENEDMHGSGMTFHTYSNSTAGYQQSTSFTDP. Asn207 carries an N-linked (GlcNAc...) asparagine glycan. The chain crosses the membrane as a helical span at residues 222–243; sequence FFIVETLCIIWFSFEFLVRFFA. Cys244 carries S-palmitoyl cysteine lipidation. At 244 to 254 the chain is on the cytoplasmic side; that stretch reads CPSKAGFFTNI. A helical transmembrane segment spans residues 255-275; sequence MNIIDIVAIIPYFITLGTELA. Topologically, residues 276–289 are extracellular; that stretch reads EKPEDAQQGQQAMS. The helical; Voltage-sensor transmembrane segment at 290 to 310 threads the bilayer; that stretch reads LAILRVIRLVRVFRIFKLSRH. Topologically, residues 311-325 are cytoplasmic; the sequence is SKGLQILGQTLKASM. Residues 312 to 325 form an S4-S5 linker region; that stretch reads KGLQILGQTLKASM. The helical transmembrane segment at 326-347 threads the bilayer; the sequence is RELGLLIFFLFIGVILFSSAVY. Over 348-361 the chain is Extracellular; it reads FAEADERDSQFPSI. An intramembrane region (helical) is located at residues 362–373; the sequence is PDAFWWAVVSMT. The Selectivity filter motif lies at 374 to 379; sequence TVGYGD. Residues 374-381 lie within the membrane without spanning it; it reads TVGYGDMV. Residues 382 to 388 lie on the Extracellular side of the membrane; that stretch reads PTTIGGK. The helical transmembrane segment at 389 to 417 threads the bilayer; sequence IVGSLCAIAGVLTIALPVPVIVSNFNYFY. Residues 418-499 lie on the Cytoplasmic side of the membrane; sequence HRETEGEEQA…VNITKMLTDV (82 aa). Tyr429 is modified (phosphotyrosine). Ser434, Ser440, Ser441, and Ser449 each carry phosphoserine. Tyr458 bears the Phosphotyrosine mark. Ser468 is modified (phosphoserine). The PDZ-binding signature appears at 497-499; the sequence is TDV.

It belongs to the potassium channel family. A (Shaker) (TC 1.A.1.2) subfamily. Kv1.2/KCNA2 sub-subfamily. As to quaternary structure, homotetramer and heterotetramer with other channel-forming alpha subunits, such as KCNA1, KCNA4, KCNA5, KCNA6 and KCNA7. Channel activity is regulated by interaction with the beta subunits, including KCNAB1 and KCNAB2. Identified in a complex with KCNA1 and KCNAB2. Identified in a complex with KCNA4 and FYN. Identified in a complex with KCNA5 and KCNAB1. Interacts with the beta subunit KCNAB1. Interacts with PTK2B. Interacts (via C-terminus) with CTTN. Interacts (via N-terminal cytoplasmic domain) with RHOA (GTP-bound form); this regulates channel activity by reducing location at the cell surface in response to CHRM1 activation. Interacts with DRD2. Interacts with SIGMAR1; cocaine consumption leads to increased interaction. Interacts with ADAM22. Interacts with CNTNAP2. Interacts (via C-terminus) with the PDZ domains of DLG1, DLG2 and DLG4. Interacts with ADAM11. Interacts with LYNX1. Phosphorylated on tyrosine residues; phosphorylation increases in response to ischemia. Phosphorylated on tyrosine residues by activated PTK2B/PYK2. Phosphorylation on tyrosine residues suppresses ion channel activity. Phosphorylated on tyrosine residues in response to CHRM1 activation; this abolishes interaction with CTTN. This is probably due to endocytosis of the phosphorylated channel subunits. Phosphorylated on serine residues in response to increased cAMP levels; phosphorylation is apparently not catalyzed by PKA. In terms of processing, N-glycosylated, with complex, sialylated N-glycans. As to expression, detected in portal vein myocytes (at protein level). Detected in portal vein. Brain, liver and kidney.

Its subcellular location is the cell membrane. It is found in the membrane. The protein localises to the cell projection. The protein resides in the axon. It localises to the synapse. Its subcellular location is the presynaptic cell membrane. It is found in the synaptosome. The protein localises to the endoplasmic reticulum membrane. The protein resides in the dendrite. It localises to the lamellipodium membrane. Its subcellular location is the cell junction. It is found in the paranodal septate junction. It carries out the reaction K(+)(in) = K(+)(out). With respect to regulation, inhibited by 4-aminopyridine (4-AP). Inhibited by dendrotoxin (DTX) and charybdotoxin (CTX), but not by tetraethylammonium (TEA). Inhibited by tityustoxin-K alpha (TsTX-Kalpha), a toxin that is highly specific for KCNA2. Inhibited by maurotoxin. Inhibited by kappaM conotoxins kappaM-RIIIJ and kappaM-RIIIK. In terms of biological role, voltage-gated potassium channel that mediates transmembrane potassium transport in excitable membranes, primarily in the brain and the central nervous system, but also in the cardiovascular system. Prevents aberrant action potential firing and regulates neuronal output. Forms tetrameric potassium-selective channels through which potassium ions pass in accordance with their electrochemical gradient. The channel alternates between opened and closed conformations in response to the voltage difference across the membrane. Can form functional homotetrameric channels and heterotetrameric channels that contain variable proportions of KCNA1, KCNA2, KCNA4, KCNA5, KCNA6, KCNA7, and possibly other family members as well; channel properties depend on the type of alpha subunits that are part of the channel. Channel properties are modulated by cytoplasmic beta subunits that regulate the subcellular location of the alpha subunits and promote rapid inactivation of delayed rectifier potassium channels. In vivo, membranes probably contain a mixture of heteromeric potassium channel complexes, making it difficult to assign currents observed in intact tissues to any particular potassium channel family member. Homotetrameric KCNA2 forms a delayed-rectifier potassium channel that opens in response to membrane depolarization, followed by slow spontaneous channel closure. In contrast, a heteromultimer formed by KCNA2 and KCNA4 shows rapid inactivation. Regulates neuronal excitability and plays a role as pacemaker in the regulation of neuronal action potentials. KCNA2-containing channels play a presynaptic role and prevent hyperexcitability and aberrant action potential firing. Response to toxins that are selective for KCNA2-containing potassium channels suggests that in Purkinje cells, dendritic subthreshold KCNA2-containing potassium channels prevent random spontaneous calcium spikes, suppressing dendritic hyperexcitability without hindering the generation of somatic action potentials, and thereby play an important role in motor coordination. Plays a role in the induction of long-term potentiation of neuron excitability in the CA3 layer of the hippocampus. May function as down-stream effector for G protein-coupled receptors and inhibit GABAergic inputs to basolateral amygdala neurons. May contribute to the regulation of neurotransmitter release, such as gamma-aminobutyric acid (GABA). Contributes to the regulation of the axonal release of the neurotransmitter dopamine. Reduced KCNA2 expression plays a role in the perception of neuropathic pain after peripheral nerve injury, but not acute pain. Plays a role in the regulation of the time spent in non-rapid eye movement (NREM) sleep. The protein is Potassium voltage-gated channel subfamily A member 2 (KCNA2) of Oryctolagus cuniculus (Rabbit).